Consider the following 103-residue polypeptide: Large ribosomal subunit protein bL36m (103 aa).

This sequence belongs to the bacterial ribosomal protein bL36 family. As to quaternary structure, component of the mitochondrial large ribosomal subunit (mt-LSU). Mature mammalian 55S mitochondrial ribosomes consist of a small (28S) and a large (39S) subunit. The 28S small subunit contains a 12S ribosomal RNA (12S mt-rRNA) and 30 different proteins. The 39S large subunit contains a 16S rRNA (16S mt-rRNA), a copy of mitochondrial valine transfer RNA (mt-tRNA(Val)), which plays an integral structural role, and 52 different proteins. bL36m has a zinc binding site.

Its subcellular location is the mitochondrion. This chain is Large ribosomal subunit protein bL36m (MRPL36), found in Homo sapiens (Human).